The following is a 182-amino-acid chain: Probable RNA 2'-phosphotransferase (182 aa).

The protein belongs to the KptA/TPT1 family.

Functionally, removes the 2'-phosphate from RNA via an intermediate in which the phosphate is ADP-ribosylated by NAD followed by a presumed transesterification to release the RNA and generate ADP-ribose 1''-2''-cyclic phosphate (APPR&gt;P). May function as an ADP-ribosylase. This is Probable RNA 2'-phosphotransferase from Flavobacterium johnsoniae (strain ATCC 17061 / DSM 2064 / JCM 8514 / BCRC 14874 / CCUG 350202 / NBRC 14942 / NCIMB 11054 / UW101) (Cytophaga johnsonae).